Here is a 299-residue protein sequence, read N- to C-terminus: Kruppel-like factor 2 (299 aa).

Disordered stretches follow at residues 19-38 (YQNAHHQHHQQHYHQQSHHH) and 146-189 (YSFS…RRDK). Residues 23–38 (HHQHHQQHYHQQSHHH) are compositionally biased toward basic residues. A compositionally biased stretch (basic and acidic residues) spans 153 to 180 (SGKDEEDPRIPLKDRGRVYHPQSTEKPK). 3 consecutive C2H2-type zinc fingers follow at residues 198–222 (HKCFYQGCGKVYTKSSHLTAHERVH), 228–252 (YPCEWPGCSWRFARSDELTRHYRKH), and 258–280 (FACKECSRKFSRSDHLQLHMKRH).

The protein belongs to the krueppel C2H2-type zinc-finger protein family. Expressed predominantly in intestine.

It is found in the nucleus. Probable transcription factor which regulates lipid metabolism. This chain is Kruppel-like factor 2, found in Caenorhabditis elegans.